Here is a 302-residue protein sequence, read N- to C-terminus: Acetylglutamate kinase (302 aa).

Residues 75–76 (GG), Arg97, and Asn198 contribute to the substrate site.

The protein belongs to the acetylglutamate kinase family. ArgB subfamily.

It is found in the cytoplasm. It catalyses the reaction N-acetyl-L-glutamate + ATP = N-acetyl-L-glutamyl 5-phosphate + ADP. The protein operates within amino-acid biosynthesis; L-arginine biosynthesis; N(2)-acetyl-L-ornithine from L-glutamate: step 2/4. Its function is as follows. Catalyzes the ATP-dependent phosphorylation of N-acetyl-L-glutamate. This chain is Acetylglutamate kinase, found in Leifsonia xyli subsp. xyli (strain CTCB07).